A 243-amino-acid polypeptide reads, in one-letter code: Transmembrane protein 176A (243 aa).

Phosphoserine is present on serine 42. 4 helical membrane-spanning segments follow: residues 65 to 85, 92 to 112, 122 to 142, and 204 to 224; these read WVVQ…LYIC, TQGA…VAFL, ALMR…AIVI, and LLGV…VYLW.

Belongs to the TMEM176 family. As to quaternary structure, interacts with MCOLN2.

The protein resides in the membrane. This Rattus norvegicus (Rat) protein is Transmembrane protein 176A (Tmem176a).